The sequence spans 1191 residues: Pyruvate-flavodoxin oxidoreductase (1191 aa).

4Fe-4S ferredoxin-type domains follow at residues 687–716 (QVCS…VKAV) and 744–773 (YVLA…TGAR). 12 residues coordinate [4Fe-4S] cluster: Cys-696, Cys-699, Cys-702, Cys-706, Cys-753, Cys-756, Cys-759, Cys-763, Cys-825, Cys-828, Cys-853, and Cys-1085.

Belongs to the pyruvate:ferredoxin/flavodoxin oxidoreductase family. Requires [4Fe-4S] cluster as cofactor.

The catalysed reaction is oxidized [flavodoxin] + pyruvate + CoA + 2 H(+) = reduced [flavodoxin] + acetyl-CoA + CO2. In terms of biological role, oxidoreductase required for the transfer of electrons from pyruvate to flavodoxin, which reduces nitrogenase. The polypeptide is Pyruvate-flavodoxin oxidoreductase (nifJ) (Rhodospirillum rubrum (strain ATCC 11170 / ATH 1.1.1 / DSM 467 / LMG 4362 / NCIMB 8255 / S1)).